Consider the following 233-residue polypeptide: Sugar fermentation stimulation protein homolog (233 aa).

This sequence belongs to the SfsA family.

This Teredinibacter turnerae (strain ATCC 39867 / T7901) protein is Sugar fermentation stimulation protein homolog.